Consider the following 134-residue polypeptide: Small ribosomal subunit protein uS8c (134 aa).

Belongs to the universal ribosomal protein uS8 family. As to quaternary structure, part of the 30S ribosomal subunit.

The protein resides in the plastid. The protein localises to the chloroplast. In terms of biological role, one of the primary rRNA binding proteins, it binds directly to 16S rRNA central domain where it helps coordinate assembly of the platform of the 30S subunit. The chain is Small ribosomal subunit protein uS8c (rps8) from Coffea arabica (Arabian coffee).